Reading from the N-terminus, the 98-residue chain is Alpha-defensin 1 (98 aa).

Residues 1 to 19 form the signal peptide; that stretch reads MRTLTLLTALLLLALQVQT. Residues 20 to 63 constitute a propeptide that is removed on maturation; it reads QSLEETADQVPAQDQPGAEAQDITISFAGDERSAREASKSLIGT. Intrachain disulfides connect Cys-66/Cys-96, Cys-68/Cys-84, and Cys-74/Cys-95.

This sequence belongs to the alpha-defensin family. As to expression, paneth cells of the small bowel.

It is found in the secreted. Has broad-spectrum antimicrobial properties. The antimicrobial activity decreases in the present of salt in vitro. Binds anionic phospholipids, which leads to the aggregation of liposomes in vitro. Membrane permeabilization of the target cells is an essential part of the peptide's mode of antimicrobial activity. No hemolytic activity against sheep or horse erythrocytes. Has antibacterial activity against the bacterial horse pathogens Gram-positive R.equi ATCC 33701 P(-) (minimum bactericidal concentration or MBC=5 ug/ml) and R.equi ATCC 33701 P(+) (MBC=5 ug/ml), which are resistant against beta-lactam antibiotics. Also has antibacterial activity against highly infectious wild-type strain R.equi 85F P(+) (MBC=5 ug/ml), S.equi subsp. equi (MBC=5 ug/ml), S.equi subsp. zooepidemicus (MBC=5 ug/ml), S.dysgalactiae subsp. equisimilis (MBC=10 ug/ml), S.choleraesuis subsp. choleraesuis serovar Typhimurium (MBC=10 ug/ml), and P.multocida subsp. multocida (MBC=&gt;10 ug/ml). Probably contributes to the antimicrobial barrier function of the small bowel mucosa. This chain is Alpha-defensin 1, found in Equus caballus (Horse).